We begin with the raw amino-acid sequence, 214 residues long: Elongation factor Ts (214 aa).

The segment at 80-83 (TDFV) is involved in Mg(2+) ion dislocation from EF-Tu.

The protein belongs to the EF-Ts family.

Its subcellular location is the cytoplasm. Functionally, associates with the EF-Tu.GDP complex and induces the exchange of GDP to GTP. It remains bound to the aminoacyl-tRNA.EF-Tu.GTP complex up to the GTP hydrolysis stage on the ribosome. The polypeptide is Elongation factor Ts (Syntrophomonas wolfei subsp. wolfei (strain DSM 2245B / Goettingen)).